The sequence spans 87 residues: Small ribosomal subunit protein bS20 (87 aa).

Belongs to the bacterial ribosomal protein bS20 family.

In terms of biological role, binds directly to 16S ribosomal RNA. This Corynebacterium urealyticum (strain ATCC 43042 / DSM 7109) protein is Small ribosomal subunit protein bS20.